A 402-amino-acid polypeptide reads, in one-letter code: Thyroid hormone receptor alpha (402 aa).

Residues 1 to 22 (MEQKPSTLDPLSEPEDTRWLDG) are disordered. The interval 1–50 (MEQKPSTLDPLSEPEDTRWLDGKRKRKSSQCLVKSSMSGYIPSYLDKDEQ) is modulating. Phosphoserine; by CK2 is present on serine 12. Phosphoserine is present on serine 28. Zn(2+)-binding residues include cysteine 51, cysteine 54, cysteine 68, cysteine 71, cysteine 89, cysteine 95, cysteine 105, and cysteine 108. NR C4-type zinc fingers lie at residues 51 to 71 (CVVC…CEGC) and 89 to 113 (CKYD…FKKC). The segment at residues 51–125 (CVVCGDKATG…VGMAMDLVLD (75 aa)) is a DNA-binding region (nuclear receptor). In terms of domain architecture, NR LBD spans 161 to 402 (EEWELIHVVT…ELFPPLFLEV (242 aa)). 3,3',5-triiodo-L-thyronine-binding residues include arginine 226 and serine 275.

The protein belongs to the nuclear hormone receptor family. NR1 subfamily. Probably interacts with SFPQ.

It localises to the nucleus. Functionally, nuclear hormone receptor that can act as a repressor or activator of transcription. High affinity receptor for thyroid hormones, including triiodothyronine and thyroxine. This Aptenodytes patagonicus (King penguin) protein is Thyroid hormone receptor alpha (THRA).